The following is a 484-amino-acid chain: Glycogen synthase (484 aa).

Lysine 15 is a binding site for ADP-alpha-D-glucose.

This sequence belongs to the glycosyltransferase 1 family. Bacterial/plant glycogen synthase subfamily.

It carries out the reaction [(1-&gt;4)-alpha-D-glucosyl](n) + ADP-alpha-D-glucose = [(1-&gt;4)-alpha-D-glucosyl](n+1) + ADP + H(+). It functions in the pathway glycan biosynthesis; glycogen biosynthesis. Its function is as follows. Synthesizes alpha-1,4-glucan chains using ADP-glucose. In Koribacter versatilis (strain Ellin345), this protein is Glycogen synthase.